The chain runs to 252 residues: Phosphoglycolate phosphatase (252 aa).

The active-site Nucleophile is the Asp-13. 3 residues coordinate Mg(2+): Asp-13, Asp-15, and Asp-192.

This sequence belongs to the HAD-like hydrolase superfamily. CbbY/CbbZ/Gph/YieH family. As to quaternary structure, monomer. Mg(2+) serves as cofactor. It depends on chloride as a cofactor.

The catalysed reaction is 2-phosphoglycolate + H2O = glycolate + phosphate. The protein operates within organic acid metabolism; glycolate biosynthesis; glycolate from 2-phosphoglycolate: step 1/1. Specifically catalyzes the dephosphorylation of 2-phosphoglycolate. Is involved in the dissimilation of the intracellular 2-phosphoglycolate formed during the DNA repair of 3'-phosphoglycolate ends, a major class of DNA lesions induced by oxidative stress. This is Phosphoglycolate phosphatase from Salmonella choleraesuis (strain SC-B67).